The primary structure comprises 92 residues: Small ribosomal subunit protein uS19 (92 aa).

It belongs to the universal ribosomal protein uS19 family.

In terms of biological role, protein S19 forms a complex with S13 that binds strongly to the 16S ribosomal RNA. The chain is Small ribosomal subunit protein uS19 from Yersinia pestis (strain Pestoides F).